The sequence spans 404 residues: Exodeoxyribonuclease 7 large subunit (404 aa).

It belongs to the XseA family. In terms of assembly, heterooligomer composed of large and small subunits.

Its subcellular location is the cytoplasm. The catalysed reaction is Exonucleolytic cleavage in either 5'- to 3'- or 3'- to 5'-direction to yield nucleoside 5'-phosphates.. Functionally, bidirectionally degrades single-stranded DNA into large acid-insoluble oligonucleotides, which are then degraded further into small acid-soluble oligonucleotides. The chain is Exodeoxyribonuclease 7 large subunit from Mesoplasma florum (strain ATCC 33453 / NBRC 100688 / NCTC 11704 / L1) (Acholeplasma florum).